We begin with the raw amino-acid sequence, 449 residues long: Asparagine--tRNA ligase (449 aa).

This sequence belongs to the class-II aminoacyl-tRNA synthetase family. In terms of assembly, homodimer.

It localises to the cytoplasm. The catalysed reaction is tRNA(Asn) + L-asparagine + ATP = L-asparaginyl-tRNA(Asn) + AMP + diphosphate + H(+). This is Asparagine--tRNA ligase from Mesomycoplasma hyopneumoniae (strain 7448) (Mycoplasma hyopneumoniae).